Here is a 721-residue protein sequence, read N- to C-terminus: Actin-like protein arp5 (721 aa).

A coiled-coil region spans residues 266 to 368 (EAAAQEKSQE…RDQQRQEESE (103 aa)). A disordered region spans residues 486-507 (ATLASEQPIQKRKRKDQSEDNF).

The protein belongs to the actin family. Component of the INO80 chromatin remodeling complex.

It localises to the nucleus. Its function is as follows. Component of the INO80 complex which remodels chromatin by shifting nucleosomes and is involved in DNA repair. The sequence is that of Actin-like protein arp5 (arp5) from Schizosaccharomyces pombe (strain 972 / ATCC 24843) (Fission yeast).